The primary structure comprises 452 residues: Phosphatidylinositol N-acetylglucosaminyltransferase GPI3 subunit (452 aa).

A helical membrane pass occupies residues 407–427; that stretch reads LYLLCGIVEYMLFFLLEWLYP.

This sequence belongs to the glycosyltransferase group 1 family. As to quaternary structure, component of the phosphatidylinositol N-acetylglucosaminyltransferase complex composed of at least GPI1, GPI2, GPI3, GPI15, GPI19 and ERI1.

Its subcellular location is the endoplasmic reticulum membrane. It catalyses the reaction a 1,2-diacyl-sn-glycero-3-phospho-(1D-myo-inositol) + UDP-N-acetyl-alpha-D-glucosamine = a 6-(N-acetyl-alpha-D-glucosaminyl)-1-(1,2-diacyl-sn-glycero-3-phospho)-1D-myo-inositol + UDP + H(+). It participates in glycolipid biosynthesis; glycosylphosphatidylinositol-anchor biosynthesis. With respect to regulation, inhibited by Ras, probably via the interaction between RAS2 and ERI1. Its function is as follows. Catalytic subunit in the complex catalyzing the transfer of N-acetylglucosamine from UDP-N-acetylglucosamine to phosphatidylinositol, the first step of GPI biosynthesis. The sequence is that of Phosphatidylinositol N-acetylglucosaminyltransferase GPI3 subunit (SPT14) from Saccharomyces cerevisiae (strain YJM789) (Baker's yeast).